Consider the following 447-residue polypeptide: Tyrosine aminotransferase (447 aa).

Lys-273 carries the post-translational modification N6-(pyridoxal phosphate)lysine. The residue at position 441 (Ser-441) is a Phosphoserine.

This sequence belongs to the class-I pyridoxal-phosphate-dependent aminotransferase family. Homodimer. Pyridoxal 5'-phosphate is required as a cofactor.

It carries out the reaction L-tyrosine + 2-oxoglutarate = 3-(4-hydroxyphenyl)pyruvate + L-glutamate. The protein operates within amino-acid degradation; L-phenylalanine degradation; acetoacetate and fumarate from L-phenylalanine: step 2/6. In terms of biological role, transaminase involved in tyrosine breakdown. Converts tyrosine to p-hydroxyphenylpyruvate. Can catalyze the reverse reaction, using glutamic acid, with 2-oxoglutarate as cosubstrate (in vitro). Has much lower affinity and transaminase activity for phenylalanine. The sequence is that of Tyrosine aminotransferase (TAT) from Bos taurus (Bovine).